The primary structure comprises 272 residues: MLFRYITFHREKVLYLTAACIFGVYISLHDACIPVVGKIGTNVTLNAVDVLPPRDQVRWSYGPGGQGYMLCIFTGTSTTTFNNTRFNFSCLSNYSLLLINVTTQYSTTYRTMTSLDHWLHQRHNHGSRWTLDTCYNLTVNENGTFPTTTTKKPTTTTRTTTTTTQRTTTTRTTTTAKKTTISTTHHKHPSPKKSTTPNSHVEHHVGFEATAAETPLQPSPQHQHLATHALWVLAVVIVIIIIIIFYFRIPQKLWLLWQHDKHGIVLIPQTDL.

Positions 1–31 are cleaved as a signal peptide; the sequence is MLFRYITFHREKVLYLTAACIFGVYISLHDA. Residues 32 to 224 are Extracellular-facing; that stretch reads CIPVVGKIGT…PLQPSPQHQH (193 aa). Residues asparagine 42, asparagine 93, asparagine 100, and asparagine 142 are each glycosylated (N-linked (GlcNAc...) asparagine; by host). Residues 142–200 are disordered; it reads NGTFPTTTTKKPTTTTRTTTTTTQRTTTTRTTTTAKKTTISTTHHKHPSPKKSTTPNSH. The segment covering 147 to 183 has biased composition (low complexity); the sequence is TTTTKKPTTTTRTTTTTTQRTTTTRTTTTAKKTTIST. Residues 225–245 traverse the membrane as a helical segment; it reads LATHALWVLAVVIVIIIIIIF. Residues 246–272 are Cytoplasmic-facing; it reads YFRIPQKLWLLWQHDKHGIVLIPQTDL.

Belongs to the RL11 family. As to quaternary structure, interacts with host PTPRC; this interaction affects T-cell signaling. Glycosylated.

It localises to the host cell membrane. The protein localises to the host endoplasmic reticulum. Its function is as follows. Plays a role in the modulation of host immune response by modulating T-cell function. Interacts with host PTPRC/CD45 and thereby reduces host TCR signaling and T-cell proliferation. The chain is Protein UL11 (UL11) from Human cytomegalovirus (strain Merlin) (HHV-5).